The following is a 352-amino-acid chain: Ion-translocating oxidoreductase complex subunit D (352 aa).

Transmembrane regions (helical) follow at residues 20–40, 42–62, 69–91, and 123–143; these read IMLLVLIAALPGIAAQTWFFG, GTLFQIVLAAITALVAEAIVL, VASHLQDYSALLTGLLLAVSIPP, and PAMIGYVVLLISFPVQMTSWL. Threonine 187 is modified (FMN phosphoryl threonine). Transmembrane regions (helical) follow at residues 215–235, 242–262, 267–287, 301–321, and 322–342; these read LAGVGWQWVNLAWLVGGVFLL, WHIPVSFLLTLALCAALGWLF, LASPQLHLLSGATMLGAFFIL, LIFGALAGVLVWLIRSFGGYP, and DGVAFAVLLANITVPLIDYYT.

It belongs to the NqrB/RnfD family. In terms of assembly, the complex is composed of six subunits: RsxA, RsxB, RsxC, RsxD, RsxE and RsxG. FMN is required as a cofactor.

It localises to the cell inner membrane. Its function is as follows. Part of a membrane-bound complex that couples electron transfer with translocation of ions across the membrane. Required to maintain the reduced state of SoxR. The sequence is that of Ion-translocating oxidoreductase complex subunit D from Salmonella choleraesuis (strain SC-B67).